Consider the following 578-residue polypeptide: Cyclin-SDS (578 aa).

The tract at residues 1 to 31 is disordered; that stretch reads MKEIAMRNSKRKPEPTPFAGKKLRSTRLRRK. A compositionally biased stretch (basic residues) spans 21–31; it reads KKLRSTRLRRK.

It belongs to the cyclin family. In terms of assembly, may interact with CDKA-1 and CDKB1-1.

In terms of biological role, meiosis-specific cyclin. Required for normal homolog synapsis and recombination in early to mid-prophase 1. May regulate the timing of sister chromatid separation. This is Cyclin-SDS (SDS) from Arabidopsis thaliana (Mouse-ear cress).